Consider the following 307-residue polypeptide: D-alanine--D-alanine ligase (307 aa).

In terms of domain architecture, ATP-grasp spans 101 to 301; sequence KTVMRAAGVS…FGELVRWMVE (201 aa). An ATP-binding site is contributed by 127–182; that stretch reads PLTPPYVVKPIAEGSSMGVIIVREERSHPPQILASDEWVYGEEVLAETYIAGRELT. Mg(2+) is bound by residues Asp251, Glu268, and Asn270.

The protein belongs to the D-alanine--D-alanine ligase family. The cofactor is Mg(2+). Mn(2+) is required as a cofactor.

The protein localises to the cytoplasm. It catalyses the reaction 2 D-alanine + ATP = D-alanyl-D-alanine + ADP + phosphate + H(+). It participates in cell wall biogenesis; peptidoglycan biosynthesis. In terms of biological role, cell wall formation. The protein is D-alanine--D-alanine ligase of Methylorubrum populi (strain ATCC BAA-705 / NCIMB 13946 / BJ001) (Methylobacterium populi).